Reading from the N-terminus, the 288-residue chain is Quinate/shikimate dehydrogenase (288 aa).

Residues Lys-71 and Asp-107 each contribute to the substrate site. NAD(+) is bound by residues 132-135, 155-158, Lys-205, 232-235, and Gly-255; these read AGGA, NRRD, and CVYN.

The protein belongs to the shikimate dehydrogenase family. In terms of assembly, homodimer.

It carries out the reaction L-quinate + NAD(+) = 3-dehydroquinate + NADH + H(+). The catalysed reaction is L-quinate + NADP(+) = 3-dehydroquinate + NADPH + H(+). The enzyme catalyses shikimate + NADP(+) = 3-dehydroshikimate + NADPH + H(+). It catalyses the reaction shikimate + NAD(+) = 3-dehydroshikimate + NADH + H(+). The protein operates within metabolic intermediate biosynthesis; chorismate biosynthesis; chorismate from D-erythrose 4-phosphate and phosphoenolpyruvate: step 4/7. Its function is as follows. The actual biological function of YdiB remains unclear, nor is it known whether 3-dehydroshikimate or quinate represents the natural substrate. Catalyzes the reversible NAD-dependent reduction of both 3-dehydroshikimate (DHSA) and 3-dehydroquinate to yield shikimate (SA) and quinate, respectively. It can use both NAD or NADP for catalysis, however it has higher catalytic efficiency with NAD. This Escherichia coli O139:H28 (strain E24377A / ETEC) protein is Quinate/shikimate dehydrogenase.